Here is an 804-residue protein sequence, read N- to C-terminus: ATP-dependent RNA helicase dbp4 (804 aa).

The disordered stretch occupies residues Met-1–Arg-24. The Q motif signature appears at Lys-46–Ser-74. The Helicase ATP-binding domain maps to Val-77 to Val-251. Ala-90–Thr-97 lines the ATP pocket. The DEAD box signature appears at Asp-199 to Asp-202. The 160-residue stretch at Lys-277–Cys-436 folds into the Helicase C-terminal domain. Disordered stretches follow at residues Gly-493 to Phe-541, Asp-589 to Lys-615, and Leu-695 to Gly-804. Positions Asp-521–Phe-541 are enriched in basic and acidic residues. The segment covering Leu-695–Lys-705 has biased composition (basic and acidic residues). Positions Gln-706–Arg-715 are enriched in basic residues.

The protein belongs to the DEAD box helicase family. DDX10/DBP4 subfamily. In terms of assembly, interacts with the U3 and U14 snoRNAs. Associates with pre-ribosomal complexes.

The protein localises to the nucleus. The protein resides in the nucleolus. The enzyme catalyses ATP + H2O = ADP + phosphate + H(+). ATP-dependent RNA helicase required for ribosome biogenesis. Involved in the release of U14 snoRNA in pre-ribosomal complexes. Required for pre-rRNA cleavage at site A2. The sequence is that of ATP-dependent RNA helicase dbp4 (dbp4) from Aspergillus terreus (strain NIH 2624 / FGSC A1156).